A 318-amino-acid polypeptide reads, in one-letter code: Ubiquitin-like domain-containing CTD phosphatase 1 (318 aa).

A Ubiquitin-like domain is found at 3–81 (LSLIIKWGGQ…IMMMGTREES (79 aa)). Positions 133 to 294 (PREGKKLLVL…VKLSQYLKEI (162 aa)) constitute an FCP1 homology domain. Mg(2+)-binding residues include aspartate 143, aspartate 145, and aspartate 253.

Requires Mg(2+) as cofactor.

The protein resides in the nucleus. It carries out the reaction O-phospho-L-seryl-[protein] + H2O = L-seryl-[protein] + phosphate. It catalyses the reaction O-phospho-L-threonyl-[protein] + H2O = L-threonyl-[protein] + phosphate. Functionally, dephosphorylates 26S nuclear proteasomes, thereby decreasing their proteolytic activity. Recruited to the 19S regulatory particle of the 26S proteasome where it dephosphorylates 19S component psmc2 which impairs psmc2 ATPase activity and disrupts 26S proteasome assembly. Has also been reported to stimulate the proteolytic activity of the 26S proteasome. This chain is Ubiquitin-like domain-containing CTD phosphatase 1 (ublcp1), found in Xenopus laevis (African clawed frog).